Consider the following 376-residue polypeptide: Response regulator aspartate phosphatase H (376 aa).

TPR repeat units follow at residues 99–132 (YYSLFFRGMYEFDQKEYVEAIGYYREAEKELPFV), 139–172 (AEFHFKVAEAYYHMKQTHVSMYHILQALDIYQNH), 180–213 (IQSLFVIAGNYDDFKHYDKALPHLEAALELAMDI), 220–253 (AISLLNIANSYDRSGDDQMAVEHFQKAAKVSREK), 259–292 (PKVLFGLSWTLCKAGQTQKAFQFIEEGLDHITAR), and 334–367 (EACARSAAAVFESSCHFEQAAAFYRKVLKAQEDI).

The protein belongs to the Rap family. As to quaternary structure, homodimer. Interacts with phosphorylated Spo0F. Each RapH protomer is bound to a monomer of Spo0F, forming a heterotetrameric complex. May also interact with non-phosphorylated Spo0F to inhibit the sporulation phosphorelay. Interacts with the C-terminal DNA-binding region of ComA. Does not interact with DegU.

Its subcellular location is the cytoplasm. With respect to regulation, both activities are inhibited by RapH. Functionally, dual specificity regulatory protein that can control both sporulation and competence by acting on two distinct response regulators: Spo0F and ComA, respectively. Is involved in the temporal separation of competence and sporulation. Acts as a phosphatase that specifically dephosphorylates the sporulation initiation phosphotransferase Spo0F and inhibits its activity. RapH can also antagonize sporulation by sterically blocking phosphoryl transfer to and from Spo0F. In addition, inhibits the activity of ComA, a transcriptional factor that regulates the development of genetic competence. Acts by binding to ComA, leading to the inhibition of its DNA-binding activity. This chain is Response regulator aspartate phosphatase H (rapH), found in Bacillus subtilis (strain 168).